The following is a 487-amino-acid chain: Arginine ADP-riboxanase CopC (487 aa).

Residues 1-12 are compositionally biased toward polar residues; that stretch reads MRVENHSPSLSK. The segment at 1–27 is disordered; the sequence is MRVENHSPSLSKLNPPEAGSGDPTAIG. His-137, Gln-138, Ser-139, Leu-143, Ala-150, Ala-152, Asn-154, and Leu-157 together coordinate NAD(+). His-137 contributes to the nicotinamide binding site. Residues Ser-139 and Leu-143 each contribute to the ADP-D-ribose site. Residues Ala-152, Asn-154, Leu-157, Gly-166, Asn-167, Thr-168, and Phe-183 each coordinate ADP-D-ribose. Residue Asn-167 coordinates NAD(+). Phe-183 contacts NAD(+). 4 residues coordinate nicotinamide: Phe-183, Phe-184, His-202, and Phe-207. NAD(+) is bound at residue His-202. ADP-D-ribose contacts are provided by Phe-207 and Asp-230. Positions 230 and 325 each coordinate NAD(+). A nicotinamide-binding site is contributed by Glu-325. The active site involves Glu-325. ANK repeat units lie at residues 368–398 and 444–476; these read DAVTAMWHAIDKGKDAVAAHLLGNWRFEAGD and SGETMLDNAVKYGNREMAAALIKHGADRNLLSE.

Belongs to the OspC family. In terms of assembly, interacts with host calmodulin (CALM1, CALM2 and/or CALM3); specifically interacts with the apo form of calmodulin and calmodulin-binding is required to mediate arginine ADP-riboxanation of host caspases.

It localises to the secreted. Its subcellular location is the host cytoplasm. The catalysed reaction is L-arginyl-[protein] + NAD(+) = ADP-riboxanated L-argininyl-[protein] + nicotinamide + NH4(+) + H(+). With respect to regulation, interaction with host calmodulin (CALM1, CALM2 and/or CALM3) is required to mediate arginine ADP-riboxanation of host caspases. In terms of biological role, ADP-riboxanase effector that inhibits host cell programmed cell death. Acts by mediating arginine ADP-riboxanation of host caspases (CASP3, CASP7, CASP8 and CASP9), blocking their processing and activation. ADP-riboxanation of host apoptotic caspases (CASP3, CASP7, CASP8 and CASP9) prevents their activation, thereby inhibiting host cell apoptosis. ADP-riboxanation of host CASP8 also inhibits host cell necroptosis. ADP-riboxanation of host CASP3 also abolishes pyroptosis by preventing its ability to cleave GSDME. May also able to inactivate CASP4/CASP11, blocking inhibiting LPS-induced pyroptosis; however this activity is unsure in vivo. ADP-riboxanation takes place in several steps: CopC first binds host caspases and NAD(+); NAD(+) is hydrolyzed to nicotinamide and ADP-D-ribose. CopC then transfers the ADP-D-ribose to the modified arginine of caspases and forms the ADP-D-ribose-deacylization on arginine, leading to deamination to remove one N-omega group on target arginine. The chain is Arginine ADP-riboxanase CopC from Chromobacterium violaceum (strain ATCC 12472 / DSM 30191 / JCM 1249 / CCUG 213 / NBRC 12614 / NCIMB 9131 / NCTC 9757 / MK).